The following is a 193-amino-acid chain: Large ribosomal subunit protein uL5 (193 aa).

It belongs to the universal ribosomal protein uL5 family. In terms of assembly, part of the 50S ribosomal subunit; part of the 5S rRNA/L5/L18/L25 subcomplex. Contacts the 5S rRNA and the P site tRNA. Forms a bridge to the 30S subunit in the 70S ribosome.

Functionally, this is one of the proteins that bind and probably mediate the attachment of the 5S RNA into the large ribosomal subunit, where it forms part of the central protuberance. In the 70S ribosome it contacts protein S13 of the 30S subunit (bridge B1b), connecting the 2 subunits; this bridge is implicated in subunit movement. Contacts the P site tRNA; the 5S rRNA and some of its associated proteins might help stabilize positioning of ribosome-bound tRNAs. The protein is Large ribosomal subunit protein uL5 of Arthrobacter sp. (strain FB24).